A 598-amino-acid chain; its full sequence is Glutamyl-tRNA(Gln) amidotransferase subunit E (598 aa).

This sequence belongs to the GatB/GatE family. GatE subfamily. In terms of assembly, heterodimer of GatD and GatE.

It catalyses the reaction L-glutamyl-tRNA(Gln) + L-glutamine + ATP + H2O = L-glutaminyl-tRNA(Gln) + L-glutamate + ADP + phosphate + H(+). In terms of biological role, allows the formation of correctly charged Gln-tRNA(Gln) through the transamidation of misacylated Glu-tRNA(Gln) in organisms which lack glutaminyl-tRNA synthetase. The reaction takes place in the presence of glutamine and ATP through an activated gamma-phospho-Glu-tRNA(Gln). The GatDE system is specific for glutamate and does not act on aspartate. The polypeptide is Glutamyl-tRNA(Gln) amidotransferase subunit E (Thermoplasma volcanium (strain ATCC 51530 / DSM 4299 / JCM 9571 / NBRC 15438 / GSS1)).